A 523-amino-acid chain; its full sequence is GMP synthase [glutamine-hydrolyzing] (523 aa).

The region spanning 8–205 is the Glutamine amidotransferase type-1 domain; sequence KILILDFGSQ…VVDICGCETN (198 aa). The Nucleophile role is filled by Cys85. Active-site residues include His179 and Glu181. The GMPS ATP-PPase domain maps to 206 to 398; the sequence is WTAENIIEDA…LGLPAEMLNR (193 aa). 233 to 239 serves as a coordination point for ATP; sequence SGGVDSS.

As to quaternary structure, homodimer.

It catalyses the reaction XMP + L-glutamine + ATP + H2O = GMP + L-glutamate + AMP + diphosphate + 2 H(+). Its pathway is purine metabolism; GMP biosynthesis; GMP from XMP (L-Gln route): step 1/1. Its function is as follows. Catalyzes the synthesis of GMP from XMP. The chain is GMP synthase [glutamine-hydrolyzing] from Histophilus somni (strain 2336) (Haemophilus somnus).